A 460-amino-acid polypeptide reads, in one-letter code: Bifunctional protein GlmU (460 aa).

Residues 1–229 (MSNYAIILAA…FEESLGVNDR (229 aa)) form a pyrophosphorylase region. Residues 8–11 (LAAG), Lys22, Gln72, and 77–78 (GT) contribute to the UDP-N-acetyl-alpha-D-glucosamine site. Residue Asp102 participates in Mg(2+) binding. Residues Gly139, Glu154, Asn169, and Asn227 each coordinate UDP-N-acetyl-alpha-D-glucosamine. Asn227 serves as a coordination point for Mg(2+). Residues 230–250 (VALATAEDVMRRRINKTHMIN) are linker. The N-acetyltransferase stretch occupies residues 251-460 (GVTFQNPNAT…KKPHHPSQQK (210 aa)). UDP-N-acetyl-alpha-D-glucosamine is bound by residues Arg332 and Lys350. Catalysis depends on His362, which acts as the Proton acceptor. Tyr365 and Asn376 together coordinate UDP-N-acetyl-alpha-D-glucosamine. Acetyl-CoA contacts are provided by residues Ala379, 385–386 (NY), Ser404, Ala422, and Arg439.

The protein in the N-terminal section; belongs to the N-acetylglucosamine-1-phosphate uridyltransferase family. It in the C-terminal section; belongs to the transferase hexapeptide repeat family. In terms of assembly, homotrimer. Mg(2+) is required as a cofactor.

Its subcellular location is the cytoplasm. The catalysed reaction is alpha-D-glucosamine 1-phosphate + acetyl-CoA = N-acetyl-alpha-D-glucosamine 1-phosphate + CoA + H(+). It carries out the reaction N-acetyl-alpha-D-glucosamine 1-phosphate + UTP + H(+) = UDP-N-acetyl-alpha-D-glucosamine + diphosphate. Its pathway is nucleotide-sugar biosynthesis; UDP-N-acetyl-alpha-D-glucosamine biosynthesis; N-acetyl-alpha-D-glucosamine 1-phosphate from alpha-D-glucosamine 6-phosphate (route II): step 2/2. The protein operates within nucleotide-sugar biosynthesis; UDP-N-acetyl-alpha-D-glucosamine biosynthesis; UDP-N-acetyl-alpha-D-glucosamine from N-acetyl-alpha-D-glucosamine 1-phosphate: step 1/1. It functions in the pathway bacterial outer membrane biogenesis; LPS lipid A biosynthesis. Catalyzes the last two sequential reactions in the de novo biosynthetic pathway for UDP-N-acetylglucosamine (UDP-GlcNAc). The C-terminal domain catalyzes the transfer of acetyl group from acetyl coenzyme A to glucosamine-1-phosphate (GlcN-1-P) to produce N-acetylglucosamine-1-phosphate (GlcNAc-1-P), which is converted into UDP-GlcNAc by the transfer of uridine 5-monophosphate (from uridine 5-triphosphate), a reaction catalyzed by the N-terminal domain. This Streptococcus thermophilus (strain ATCC BAA-491 / LMD-9) protein is Bifunctional protein GlmU.